Consider the following 404-residue polypeptide: LL-diaminopimelate aminotransferase (404 aa).

Residues Tyr-15 and Gly-42 each coordinate substrate. Residues Tyr-72, 108–109, Tyr-132, Asn-188, Tyr-219, and 247–249 each bind pyridoxal 5'-phosphate; these read AK and SFS. Substrate contacts are provided by Lys-109, Tyr-132, and Asn-188. Residue Lys-250 is modified to N6-(pyridoxal phosphate)lysine. Residues Arg-258 and Asn-288 each coordinate pyridoxal 5'-phosphate. Substrate-binding residues include Asn-288 and Arg-384.

Belongs to the class-I pyridoxal-phosphate-dependent aminotransferase family. LL-diaminopimelate aminotransferase subfamily. In terms of assembly, homodimer. Pyridoxal 5'-phosphate serves as cofactor.

It catalyses the reaction (2S,6S)-2,6-diaminopimelate + 2-oxoglutarate = (S)-2,3,4,5-tetrahydrodipicolinate + L-glutamate + H2O + H(+). It participates in amino-acid biosynthesis; L-lysine biosynthesis via DAP pathway; LL-2,6-diaminopimelate from (S)-tetrahydrodipicolinate (aminotransferase route): step 1/1. Functionally, involved in the synthesis of meso-diaminopimelate (m-DAP or DL-DAP), required for both lysine and peptidoglycan biosynthesis. Catalyzes the direct conversion of tetrahydrodipicolinate to LL-diaminopimelate. The protein is LL-diaminopimelate aminotransferase of Agathobacter rectalis (strain ATCC 33656 / DSM 3377 / JCM 17463 / KCTC 5835 / VPI 0990) (Eubacterium rectale).